Consider the following 86-residue polypeptide: Photosystem I reaction center subunit PsaK 1 (86 aa).

The next 2 membrane-spanning stretches (helical) occupy residues 14–34 (LSWS…AIAF) and 61–81 (AVLG…LGLA).

The protein belongs to the PsaG/PsaK family.

Its subcellular location is the cellular thylakoid membrane. This is Photosystem I reaction center subunit PsaK 1 (psaK1) from Synechocystis sp. (strain ATCC 27184 / PCC 6803 / Kazusa).